We begin with the raw amino-acid sequence, 501 residues long: Zinc finger and SCAN domain-containing protein 12 (501 aa).

Residues Lys-20 and Lys-26 each participate in a glycyl lysine isopeptide (Lys-Gly) (interchain with G-Cter in SUMO2) cross-link. The SCAN box domain occupies Gln-51–Gly-132. Residues Arg-175–Val-194 form a disordered region. Residues Glu-180–Val-194 show a composition bias toward polar residues. A Glycyl lysine isopeptide (Lys-Gly) (interchain with G-Cter in SUMO2) cross-link involves residue Lys-197. Positions Glu-223–Glu-255 are disordered. Positions Pro-241–Asn-253 are enriched in polar residues. C2H2-type zinc fingers lie at residues His-269 to His-291, Tyr-297 to His-319, Tyr-325 to His-347, Tyr-353 to His-375, Tyr-381 to His-403, and Tyr-409 to His-431. The tract at residues Glu-429 to Thr-450 is disordered. Residues Phe-437 to Arg-447 show a composition bias toward polar residues. A C2H2-type 7 zinc finger spans residues Tyr-455–His-477. The segment at Tyr-483–His-501 adopts a C2H2-type 8; degenerate zinc-finger fold.

This sequence belongs to the krueppel C2H2-type zinc-finger protein family. In terms of tissue distribution, testis specific.

It is found in the nucleus. Its function is as follows. May be involved in transcriptional regulation. In Mus musculus (Mouse), this protein is Zinc finger and SCAN domain-containing protein 12 (Zscan12).